We begin with the raw amino-acid sequence, 269 residues long: Centromere protein K (269 aa).

Residues 1–10 (MNQEDLDPDS) show a composition bias toward acidic residues. The tract at residues 1–20 (MNQEDLDPDSTTDVGDVTNT) is disordered. 2 coiled-coil regions span residues 22–42 (EELIRECEEMWKDMEECQNKL) and 98–151 (QKLR…NKVE).

This sequence belongs to the CENP-K/MCM22 family. As to quaternary structure, component of the CENPA-CAD complex, composed of CENPI, CENPK, CENPL, CENPO, CENPP, CENPQ, CENPR and CENPS. The CENPA-CAD complex interacts with the CENPA-NAC complex, at least composed of CENPA, CENPC, CENPH, CENPM, CENPN, CENPT and CENPU. Interacts directly with CENPH. In terms of tissue distribution, detected in several fetal organs with highest levels in fetal liver. In adults, it is weakly expressed in lung and placenta.

The protein localises to the nucleus. The protein resides in the chromosome. It is found in the centromere. Its subcellular location is the kinetochore. Functionally, component of the CENPA-CAD (nucleosome distal) complex, a complex recruited to centromeres which is involved in assembly of kinetochore proteins, mitotic progression and chromosome segregation. May be involved in incorporation of newly synthesized CENPA into centromeres via its interaction with the CENPA-NAC complex. Acts in coordination with KNL1 to recruit the NDC80 complex to the outer kinetochore. The protein is Centromere protein K (CENPK) of Homo sapiens (Human).